Consider the following 427-residue polypeptide: Serine--tRNA ligase (427 aa).

Residue Thr229–Glu231 participates in L-serine binding. Residue Arg260 to Glu262 participates in ATP binding. An L-serine-binding site is contributed by Glu283. Glu347–Ser350 serves as a coordination point for ATP. Ser383 is a binding site for L-serine.

This sequence belongs to the class-II aminoacyl-tRNA synthetase family. Type-1 seryl-tRNA synthetase subfamily. As to quaternary structure, homodimer. The tRNA molecule binds across the dimer.

It is found in the cytoplasm. It catalyses the reaction tRNA(Ser) + L-serine + ATP = L-seryl-tRNA(Ser) + AMP + diphosphate + H(+). The enzyme catalyses tRNA(Sec) + L-serine + ATP = L-seryl-tRNA(Sec) + AMP + diphosphate + H(+). It functions in the pathway aminoacyl-tRNA biosynthesis; selenocysteinyl-tRNA(Sec) biosynthesis; L-seryl-tRNA(Sec) from L-serine and tRNA(Sec): step 1/1. Catalyzes the attachment of serine to tRNA(Ser). Is also able to aminoacylate tRNA(Sec) with serine, to form the misacylated tRNA L-seryl-tRNA(Sec), which will be further converted into selenocysteinyl-tRNA(Sec). The polypeptide is Serine--tRNA ligase (Oleidesulfovibrio alaskensis (strain ATCC BAA-1058 / DSM 17464 / G20) (Desulfovibrio alaskensis)).